Here is a 201-residue protein sequence, read N- to C-terminus: Ribosome maturation factor RimP (201 aa).

The protein belongs to the RimP family.

The protein resides in the cytoplasm. In terms of biological role, required for maturation of 30S ribosomal subunits. This Rhizobium leguminosarum bv. trifolii (strain WSM2304) protein is Ribosome maturation factor RimP.